Here is a 396-residue protein sequence, read N- to C-terminus: L-lactate dehydrogenase (396 aa).

In terms of domain architecture, FMN hydroxy acid dehydrogenase spans 1–380 (MIISAASDYR…SGDSLVQELG (380 aa)). Y24 is a binding site for substrate. Positions 106 and 127 each coordinate FMN. Y129 contributes to the substrate binding site. T155 contributes to the FMN binding site. R164 is a substrate binding site. K251 contributes to the FMN binding site. Residue H275 is the Proton acceptor of the active site. Residue R278 participates in substrate binding. Residue 306-330 (DSGIRNGLDVVRMIALGADTVLLGR) coordinates FMN.

This sequence belongs to the FMN-dependent alpha-hydroxy acid dehydrogenase family. FMN serves as cofactor.

It is found in the cell inner membrane. It carries out the reaction (S)-lactate + A = pyruvate + AH2. Its function is as follows. Catalyzes the conversion of L-lactate to pyruvate. Is coupled to the respiratory chain. The sequence is that of L-lactate dehydrogenase from Salmonella newport (strain SL254).